The following is a 132-amino-acid chain: Homeobox protein ceh-1 (132 aa).

The segment at residues 1–60 (MRRARTAFTYEQLVALENKFKTSRYLSVVERLNLAIQLQLSETQVKIWFQNRRTKWKKHN) is a DNA-binding region (homeobox). The segment at 56–80 (WKKHNPGQDANTPQTPPSSDETQIQ) is disordered. Positions 63–80 (QDANTPQTPPSSDETQIQ) are enriched in polar residues.

It localises to the nucleus. In Caenorhabditis elegans, this protein is Homeobox protein ceh-1 (ceh-1).